We begin with the raw amino-acid sequence, 1110 residues long: Nitric oxide synthase 3 (1110 aa).

Positions 1–74 are disordered; it reads MGNFKSVGQE…PPEGPKFPRV (74 aa). Over residues 15-27 the composition is skewed to gly residues; that stretch reads CGLGLGLGLGLCG. Low complexity predominate over residues 31–40; it reads PASPAPVSAS. The span at 47-69 shows a compositional bias: pro residues; it reads SSPPLPLPAPEHSPPLTRPPEGP. The Zn(2+) site is built by Cys-97 and Cys-102. Residues 101–489 are interaction with NOSIP; that stretch reads RCLGSLVFPR…PDPWKGSGTK (389 aa). Residue Ser-105 coordinates (6R)-L-erythro-5,6,7,8-tetrahydrobiopterin. At Ser-117 the chain carries Phosphoserine. Heme b is bound at residue Cys-187. L-arginine contacts are provided by Gln-250, Trp-359, Tyr-360, and Glu-364. Arg-368 serves as a coordination point for (6R)-L-erythro-5,6,7,8-tetrahydrobiopterin. Asn-369 provides a ligand contact to L-arginine. 3 residues coordinate (6R)-L-erythro-5,6,7,8-tetrahydrobiopterin: Ala-449, Trp-450, and Phe-463. Tyr-478 is a heme b binding site. A Phosphothreonine modification is found at Thr-498. Positions 529, 530, 531, 533, 575, and 576 each coordinate FMN. Phosphoserine occurs at positions 618, 636, and 641. The FMN site is built by Ser-657, Cys-664, Glu-690, and Gln-694. An NADP(+)-binding site is contributed by Arg-779. An FAD-binding site is contributed by His-801. The segment at 821–848 is disordered; it reads EDPPPPAESVAVEQLEKGSPGGPPPGWV. A Phosphoserine modification is found at Ser-839. FAD contacts are provided by Arg-941, Tyr-943, Ser-944, Thr-959, Ala-961, Tyr-965, Val-978, Cys-979, and Ser-980. Residues Thr-1019, Arg-1052, Ser-1081, Arg-1082, and Lys-1088 each contribute to the NADP(+) site.

The protein belongs to the NOS family. In terms of assembly, homodimer. Interacts with NOSIP and NOSTRIN. Interacts with HSP90AB1. Forms a complex with ASL, ASS1 and SLC7A1; the complex regulates cell-autonomous L-arginine synthesis and citrulline recycling while channeling extracellular L-arginine to nitric oxide synthesis pathway. It depends on heme b as a cofactor. FAD serves as cofactor. The cofactor is FMN. Requires (6R)-L-erythro-5,6,7,8-tetrahydrobiopterin as cofactor.

Its subcellular location is the membrane. The protein resides in the caveola. The protein localises to the cytoplasm. It is found in the cytoskeleton. It localises to the golgi apparatus. Its subcellular location is the cell membrane. The catalysed reaction is 2 L-arginine + 3 NADPH + 4 O2 + H(+) = 2 L-citrulline + 2 nitric oxide + 3 NADP(+) + 4 H2O. Stimulated by calcium/calmodulin. Inhibited by NOSIP and NOSTRIN. Functionally, produces nitric oxide (NO) which is implicated in vascular smooth muscle relaxation through a cGMP-mediated signal transduction pathway. NO mediates vascular endothelial growth factor (VEGF)-induced angiogenesis in coronary vessels and promotes blood clotting through the activation of platelets. This is Nitric oxide synthase 3 (NOS3) from Cavia porcellus (Guinea pig).